Reading from the N-terminus, the 458-residue chain is tRNA(Ile)-lysidine synthase (458 aa).

35–40 (SGGVDS) is a binding site for ATP.

The protein belongs to the tRNA(Ile)-lysidine synthase family.

Its subcellular location is the cytoplasm. It catalyses the reaction cytidine(34) in tRNA(Ile2) + L-lysine + ATP = lysidine(34) in tRNA(Ile2) + AMP + diphosphate + H(+). Its function is as follows. Ligates lysine onto the cytidine present at position 34 of the AUA codon-specific tRNA(Ile) that contains the anticodon CAU, in an ATP-dependent manner. Cytidine is converted to lysidine, thus changing the amino acid specificity of the tRNA from methionine to isoleucine. The chain is tRNA(Ile)-lysidine synthase from Nitrosomonas europaea (strain ATCC 19718 / CIP 103999 / KCTC 2705 / NBRC 14298).